A 140-amino-acid polypeptide reads, in one-letter code: ATP synthase epsilon chain (140 aa).

The protein belongs to the ATPase epsilon chain family. In terms of assembly, F-type ATPases have 2 components, CF(1) - the catalytic core - and CF(0) - the membrane proton channel. CF(1) has five subunits: alpha(3), beta(3), gamma(1), delta(1), epsilon(1). CF(0) has three main subunits: a, b and c.

The protein localises to the cell inner membrane. In terms of biological role, produces ATP from ADP in the presence of a proton gradient across the membrane. This chain is ATP synthase epsilon chain, found in Laribacter hongkongensis (strain HLHK9).